Consider the following 156-residue polypeptide: MNLNATILGQAIAFVLFVLFCMKYIWPPIMAAIEKRQKEIADGLSSAERAKKDLDLAQANATDQLKKAKAEAQVIIEQASKRKAQILDEAKAEAEQERNKIVAQAQAEIDAERKRAREELRKQVAMLAIAGAEKIIERSVDEAANSDIVDKLVAEL.

A helical membrane pass occupies residues 11 to 31 (AIAFVLFVLFCMKYIWPPIMA).

The protein belongs to the ATPase B chain family. In terms of assembly, F-type ATPases have 2 components, F(1) - the catalytic core - and F(0) - the membrane proton channel. F(1) has five subunits: alpha(3), beta(3), gamma(1), delta(1), epsilon(1). F(0) has three main subunits: a(1), b(2) and c(10-14). The alpha and beta chains form an alternating ring which encloses part of the gamma chain. F(1) is attached to F(0) by a central stalk formed by the gamma and epsilon chains, while a peripheral stalk is formed by the delta and b chains.

The protein resides in the cell inner membrane. Its function is as follows. F(1)F(0) ATP synthase produces ATP from ADP in the presence of a proton or sodium gradient. F-type ATPases consist of two structural domains, F(1) containing the extramembraneous catalytic core and F(0) containing the membrane proton channel, linked together by a central stalk and a peripheral stalk. During catalysis, ATP synthesis in the catalytic domain of F(1) is coupled via a rotary mechanism of the central stalk subunits to proton translocation. Component of the F(0) channel, it forms part of the peripheral stalk, linking F(1) to F(0). This chain is ATP synthase subunit b, found in Yersinia enterocolitica serotype O:8 / biotype 1B (strain NCTC 13174 / 8081).